Here is a 195-residue protein sequence, read N- to C-terminus: Imidazoleglycerol-phosphate dehydratase (195 aa).

It belongs to the imidazoleglycerol-phosphate dehydratase family.

It is found in the cytoplasm. The catalysed reaction is D-erythro-1-(imidazol-4-yl)glycerol 3-phosphate = 3-(imidazol-4-yl)-2-oxopropyl phosphate + H2O. It functions in the pathway amino-acid biosynthesis; L-histidine biosynthesis; L-histidine from 5-phospho-alpha-D-ribose 1-diphosphate: step 6/9. This Bacillus cytotoxicus (strain DSM 22905 / CIP 110041 / 391-98 / NVH 391-98) protein is Imidazoleglycerol-phosphate dehydratase.